The following is a 347-amino-acid chain: Anthranilate phosphoribosyltransferase (347 aa).

5-phospho-alpha-D-ribose 1-diphosphate contacts are provided by residues Gly88, 91 to 92 (GD), Thr96, 98 to 101 (NIST), 116 to 124 (KHGNRAASS), and Ser128. Gly88 lines the anthranilate pocket. Ser100 lines the Mg(2+) pocket. Asn119 provides a ligand contact to anthranilate. Arg174 contributes to the anthranilate binding site. Residues Asp233 and Glu234 each contribute to the Mg(2+) site.

Belongs to the anthranilate phosphoribosyltransferase family. As to quaternary structure, homodimer. Mg(2+) serves as cofactor.

The enzyme catalyses N-(5-phospho-beta-D-ribosyl)anthranilate + diphosphate = 5-phospho-alpha-D-ribose 1-diphosphate + anthranilate. It functions in the pathway amino-acid biosynthesis; L-tryptophan biosynthesis; L-tryptophan from chorismate: step 2/5. Catalyzes the transfer of the phosphoribosyl group of 5-phosphorylribose-1-pyrophosphate (PRPP) to anthranilate to yield N-(5'-phosphoribosyl)-anthranilate (PRA). This chain is Anthranilate phosphoribosyltransferase, found in Rhodospirillum rubrum (strain ATCC 11170 / ATH 1.1.1 / DSM 467 / LMG 4362 / NCIMB 8255 / S1).